Consider the following 192-residue polypeptide: Imidazole glycerol phosphate synthase subunit HisH (192 aa).

The region spanning 1–192 (MIAIIDYGLG…QALKGGFIND (192 aa)) is the Glutamine amidotransferase type-1 domain. The active-site Nucleophile is the cysteine 77. Catalysis depends on residues histidine 169 and glutamate 171.

As to quaternary structure, heterodimer of HisH and HisF.

It localises to the cytoplasm. It carries out the reaction 5-[(5-phospho-1-deoxy-D-ribulos-1-ylimino)methylamino]-1-(5-phospho-beta-D-ribosyl)imidazole-4-carboxamide + L-glutamine = D-erythro-1-(imidazol-4-yl)glycerol 3-phosphate + 5-amino-1-(5-phospho-beta-D-ribosyl)imidazole-4-carboxamide + L-glutamate + H(+). The catalysed reaction is L-glutamine + H2O = L-glutamate + NH4(+). It functions in the pathway amino-acid biosynthesis; L-histidine biosynthesis; L-histidine from 5-phospho-alpha-D-ribose 1-diphosphate: step 5/9. Its function is as follows. IGPS catalyzes the conversion of PRFAR and glutamine to IGP, AICAR and glutamate. The HisH subunit catalyzes the hydrolysis of glutamine to glutamate and ammonia as part of the synthesis of IGP and AICAR. The resulting ammonia molecule is channeled to the active site of HisF. This is Imidazole glycerol phosphate synthase subunit HisH from Staphylococcus epidermidis (strain ATCC 35984 / DSM 28319 / BCRC 17069 / CCUG 31568 / BM 3577 / RP62A).